The primary structure comprises 439 residues: Probable RNA-binding protein 23 (439 aa).

A disordered region spans residues 13 to 159 (MLEAPYKKEE…PVREPVDNLS (147 aa)). Residues 17 to 34 (PYKKEEDEQQRKEVKKDY) show a composition bias toward basic and acidic residues. Over residues 36–57 (SNTTSSTSNSGNETSGSSTIGE) the composition is skewed to low complexity. A compositionally biased stretch (basic residues) spans 60–90 (KKKRSRSHNKSRDRKRSRSRDRDRYRRRNSR). Positions 103-125 (RSWDRRHGSESRSRDHRREDRVH) are enriched in basic and acidic residues. Residues Ser128 and Ser149 each carry the phosphoserine modification. Positions 144–159 (HFREKSPVREPVDNLS) are enriched in basic and acidic residues. RRM domains follow at residues 166–243 (RTVF…ASQA) and 263–341 (MRLY…HVTE).

It belongs to the splicing factor SR family. In terms of processing, aryl sulfonamide anticancer drugs, such as indisulam (E7070) or E7820, promote ubiquitination and subsequent degradation by the DCX(DCAF15) complex. Aryl sulfonamide anticancer drugs change the substrate specificity of DCAF15 by acting as a molecular glue that promotes binding between DCAF15 and weak affinity interactor RBM23. Highly expressed in placenta, liver, skeletal muscle, heart and kidney. Expressed at lower levels in the colon, thymus, spleen, small intestine and lung.

The protein localises to the nucleus. Functionally, RNA-binding protein that acts both as a transcription coactivator and pre-mRNA splicing factor. Regulates steroid hormone receptor-mediated transcription, independently of the pre-mRNA splicing factor activity. The polypeptide is Probable RNA-binding protein 23 (Homo sapiens (Human)).